A 342-amino-acid polypeptide reads, in one-letter code: Nicotinate-nucleotide--dimethylbenzimidazole phosphoribosyltransferase (342 aa).

The Proton acceptor role is filled by Glu311.

The protein belongs to the CobT family.

It carries out the reaction 5,6-dimethylbenzimidazole + nicotinate beta-D-ribonucleotide = alpha-ribazole 5'-phosphate + nicotinate + H(+). Its pathway is nucleoside biosynthesis; alpha-ribazole biosynthesis; alpha-ribazole from 5,6-dimethylbenzimidazole: step 1/2. Catalyzes the synthesis of alpha-ribazole-5'-phosphate from nicotinate mononucleotide (NAMN) and 5,6-dimethylbenzimidazole (DMB). This is Nicotinate-nucleotide--dimethylbenzimidazole phosphoribosyltransferase from Vibrio atlanticus (strain LGP32) (Vibrio splendidus (strain Mel32)).